The chain runs to 141 residues: Oleosin 14.9 kDa (141 aa).

Over residues Met1 to Pro22 the composition is skewed to basic and acidic residues. The segment at Met1–Ala24 is disordered. The tract at residues Met1 to Lys29 is polar. The hydrophobic stretch occupies residues Ala30–Ser141. The next 3 helical transmembrane spans lie at Gly38–Ala58, Pro60–Ile80, and Thr81–Tyr101.

The protein belongs to the oleosin family.

The protein localises to the lipid droplet. It is found in the membrane. In terms of biological role, may have a structural role to stabilize the lipid body during desiccation of the seed by preventing coalescence of the oil. Probably interacts with both lipid and phospholipid moieties of lipid bodies. May also provide recognition signals for specific lipase anchorage in lipolysis during seedling growth. The polypeptide is Oleosin 14.9 kDa (OL3) (Arabidopsis thaliana (Mouse-ear cress)).